A 288-amino-acid polypeptide reads, in one-letter code: Signal recognition particle receptor FtsY (288 aa).

Residues 93 to 100 (GINGTGKT), 175 to 179 (DTAGR), and 233 to 236 (TKLD) each bind GTP.

It belongs to the GTP-binding SRP family. FtsY subfamily. In terms of assembly, part of the signal recognition particle protein translocation system, which is composed of SRP and FtsY.

It localises to the cell membrane. The protein localises to the cytoplasm. It carries out the reaction GTP + H2O = GDP + phosphate + H(+). In terms of biological role, involved in targeting and insertion of nascent membrane proteins into the cytoplasmic membrane. Acts as a receptor for the complex formed by the signal recognition particle (SRP) and the ribosome-nascent chain (RNC). The sequence is that of Signal recognition particle receptor FtsY from Thermoplasma acidophilum (strain ATCC 25905 / DSM 1728 / JCM 9062 / NBRC 15155 / AMRC-C165).